The following is a 517-amino-acid chain: T-box transcription factor TBX22 (517 aa).

The disordered stretch occupies residues 1–83 (MALSSRAHAF…SDESNSQESL (83 aa)). A compositionally biased stretch (acidic residues) spans 35 to 45 (LQEEQFVEEGE). The segment covering 46–66 (EILRSPSRDSQQPEKRLKAES) has biased composition (basic and acidic residues). Residues 74–83 (SDESNSQESL) show a composition bias toward low complexity. A DNA-binding region (T-box) is located at residues 93–280 (LQGSDLWKRF…RNPFAKGFRD (188 aa)). The segment at 312 to 333 (TQSGSSGSSPVTSSGGAPSPLN) is disordered. Residues 314–333 (SGSSGSSPVTSSGGAPSPLN) are compositionally biased toward low complexity.

It localises to the nucleus. Functionally, probable transcriptional regulator involved in developmental processes. This is major determinant crucial to palatogenesis. This is T-box transcription factor TBX22 (Tbx22) from Mus musculus (Mouse).